Here is a 352-residue protein sequence, read N- to C-terminus: 4-hydroxy-3-methylbut-2-en-1-yl diphosphate synthase (flavodoxin) (352 aa).

Residues C262, C265, C297, and E304 each coordinate [4Fe-4S] cluster.

This sequence belongs to the IspG family. It depends on [4Fe-4S] cluster as a cofactor.

The catalysed reaction is (2E)-4-hydroxy-3-methylbut-2-enyl diphosphate + oxidized [flavodoxin] + H2O + 2 H(+) = 2-C-methyl-D-erythritol 2,4-cyclic diphosphate + reduced [flavodoxin]. It functions in the pathway isoprenoid biosynthesis; isopentenyl diphosphate biosynthesis via DXP pathway; isopentenyl diphosphate from 1-deoxy-D-xylulose 5-phosphate: step 5/6. Converts 2C-methyl-D-erythritol 2,4-cyclodiphosphate (ME-2,4cPP) into 1-hydroxy-2-methyl-2-(E)-butenyl 4-diphosphate. The protein is 4-hydroxy-3-methylbut-2-en-1-yl diphosphate synthase (flavodoxin) of Campylobacter curvus (strain 525.92).